We begin with the raw amino-acid sequence, 239 residues long: tRNA (guanine-N(7)-)-methyltransferase (239 aa).

4 residues coordinate S-adenosyl-L-methionine: Glu-69, Glu-94, Asp-121, and Asp-144. Residue Asp-144 is part of the active site. A substrate-binding site is contributed by Lys-148. Residues 150 to 155 (RHNKRR) form an interaction with RNA region. Residues Asp-180 and 217–220 (TKFE) each bind substrate.

It belongs to the class I-like SAM-binding methyltransferase superfamily. TrmB family. As to quaternary structure, monomer.

It carries out the reaction guanosine(46) in tRNA + S-adenosyl-L-methionine = N(7)-methylguanosine(46) in tRNA + S-adenosyl-L-homocysteine. Its pathway is tRNA modification; N(7)-methylguanine-tRNA biosynthesis. In terms of biological role, catalyzes the formation of N(7)-methylguanine at position 46 (m7G46) in tRNA. The polypeptide is tRNA (guanine-N(7)-)-methyltransferase (Cronobacter sakazakii (strain ATCC BAA-894) (Enterobacter sakazakii)).